The chain runs to 517 residues: General transcription factor IIF subunit 1 (517 aa).

A2 is subject to N-acetylalanine. T156 carries the phosphothreonine modification. The tract at residues 178–466 is disordered; the sequence is QQRRLKDQDQ…DAVRRYLTRK (289 aa). Residues S217, S218, S221, and S224 each carry the phosphoserine modification. Positions 232-251 are enriched in basic residues; that stretch reads PKAKKKAPLAKGGRKKKKKK. Acidic residues-rich tracts occupy residues 255–270 and 303–325; these read DEAF…EGQE and EQSD…EEEE. Position 331 is a phosphothreonine (T331). Acidic residues predominate over residues 343-355; that stretch reads EESDSSEESDIDS. Basic residues predominate over residues 364-374; the sequence is AKKKTPPKRER. A phosphoserine mark is found at S377, S380, S381, and S385. The span at 377-391 shows a compositional bias: low complexity; sequence SGGSSRGNSRPGTPS. T389 is subject to Phosphothreonine. Phosphoserine is present on S391. K407 carries the post-translational modification N6-acetyllysine. Residues 428–452 are compositionally biased toward polar residues; sequence GPQSLSGKSTPQPPSGKTTPNSGDV. Phosphoserine is present on residues S431, S433, and S436. Phosphothreonine is present on residues T437 and T446. Position 449 is a phosphoserine (S449). 3 residues coordinate Zn(2+): E503, H512, and E517.

This sequence belongs to the TFIIF alpha subunit family. Heterodimer of an alpha and a beta subunit. Interacts with GTF2F2, CTDP1, TAF6/TAFII80 and URI1. Interacts with GTF2B (via C-terminus and preferentially via acetylated form); this interaction prevents binding of GTF2B to GTF2F2. Part of TBP-based Pol II pre-initiation complex (PIC), in which Pol II core assembles with general transcription factors and other specific initiation factors including GTF2E1, GTF2E2, GTF2F1, GTF2F2, TCEA1, ERCC2, ERCC3, GTF2H2, GTF2H3, GTF2H4, GTF2H5, GTF2A1, GTF2A2, GTF2B and TBP; this large multi-subunit PIC complex mediates DNA unwinding and targets Pol II core to the transcription start site where the first phosphodiester bond forms. In terms of processing, phosphorylated on Ser and other residues by TAF1 and casein kinase II-like kinases.

It is found in the nucleus. Its function is as follows. TFIIF is a general transcription initiation factor that binds to RNA polymerase II and helps to recruit it to the initiation complex in collaboration with TFIIB. It promotes transcription elongation. The polypeptide is General transcription factor IIF subunit 1 (GTF2F1) (Homo sapiens (Human)).